Reading from the N-terminus, the 335-residue chain is POU domain, class 5, transcription factor 2 (335 aa).

The tract at residues 1-23 (MAGRRSSNVCPFPGNSGGGLEGP) is disordered. The 75-residue stretch at 113-187 (DVSAIQKEME…LLKMWLEEVD (75 aa)) folds into the POU-specific domain. Residues 205–264 (RKRRRASRERRIGSNLEKLFLQCPEPTPQQISYIAGRLRLQKDLVQVWFSNRSQMAGWPT) constitute a DNA-binding region (homeobox).

It belongs to the POU transcription factor family. Class-5 subfamily. In terms of tissue distribution, highly restricted to adult testis.

It localises to the nucleus. In terms of biological role, transcription factor that binds preferentially to the octamer motif (5'-ATGTTAAT-3'). May exert a regulatory function in meiotic events that are required for terminal differentiation of male germ cell. This is POU domain, class 5, transcription factor 2 (Pou5f2) from Rattus norvegicus (Rat).